The following is a 457-amino-acid chain: Probable ubiquitin carboxyl-terminal hydrolase 16 (457 aa).

The interval 34 to 97 (VSSPSVPEGT…DGANDFVDED (64 aa)) is disordered. A compositionally biased stretch (polar residues) spans 45–67 (TVLNNPKQSTVSRKSFSAPTSPT). S61 is subject to Phosphoserine. Position 64 is a phosphothreonine (T64). S65 carries the post-translational modification Phosphoserine. A USP domain is found at 125–429 (PGLVNLGNTC…QAYILQYKRK (305 aa)). C134 acts as the Nucleophile in catalysis. The active-site Proton acceptor is the H388. The segment at 434 to 457 (SKHKLNTENTVTKTSNKKRRKISF) is disordered. The span at 448–457 (SNKKRRKISF) shows a compositional bias: basic residues.

The protein belongs to the peptidase C19 family.

The enzyme catalyses Thiol-dependent hydrolysis of ester, thioester, amide, peptide and isopeptide bonds formed by the C-terminal Gly of ubiquitin (a 76-residue protein attached to proteins as an intracellular targeting signal).. The sequence is that of Probable ubiquitin carboxyl-terminal hydrolase 16 (ubp16) from Schizosaccharomyces pombe (strain 972 / ATCC 24843) (Fission yeast).